A 583-amino-acid polypeptide reads, in one-letter code: Chromosomal replication initiator protein DnaA (583 aa).

A domain I, interacts with DnaA modulators region spans residues 1–91; it reads MNAENLDPAT…SPMFPAFKVM (91 aa). 2 disordered regions span residues 86 to 179 and 197 to 232; these read PAFK…QQPV and VAGF…NYRD. The interval 91-235 is domain II; sequence MPPAQPEPQT…VTGNYRDPVT (145 aa). Polar residues predominate over residues 97–106; that stretch reads EPQTTASPED. 2 stretches are compositionally biased toward basic and acidic residues: residues 126–135 and 147–174; these read EDSRTPRHSA and QERE…EHEP. Over residues 205–226 the composition is skewed to polar residues; it reads AGTTAPQYPPQSEMQGSFTPGV. A domain III, AAA+ region region spans residues 236-460; the sequence is HLNSNDTFDT…GALKRVIAMA (225 aa). Residues Gly280, Gly282, Lys283, and Thr284 each contribute to the ATP site. A domain IV, binds dsDNA region spans residues 461–583; sequence SLNHQPVTRA…TVELKQHLND (123 aa).

It belongs to the DnaA family. As to quaternary structure, oligomerizes as a right-handed, spiral filament on DNA at oriC.

The protein resides in the cytoplasm. Functionally, plays an essential role in the initiation and regulation of chromosomal replication. ATP-DnaA binds to the origin of replication (oriC) to initiate formation of the DNA replication initiation complex once per cell cycle. Binds the DnaA box (a 9 base pair repeat at the origin) and separates the double-stranded (ds)DNA. Forms a right-handed helical filament on oriC DNA; dsDNA binds to the exterior of the filament while single-stranded (ss)DNA is stabiized in the filament's interior. The ATP-DnaA-oriC complex binds and stabilizes one strand of the AT-rich DNA unwinding element (DUE), permitting loading of DNA polymerase. After initiation quickly degrades to an ADP-DnaA complex that is not apt for DNA replication. Binds acidic phospholipids. This chain is Chromosomal replication initiator protein DnaA, found in Bifidobacterium animalis subsp. lactis (strain AD011).